The chain runs to 829 residues: Leucine--tRNA ligase (829 aa).

Residues 40 to 51 carry the 'HIGH' region motif; it reads PYPSGAGLHVGH. Residues 609–613 carry the 'KMSKS' region motif; it reads KMSKS. K612 lines the ATP pocket.

Belongs to the class-I aminoacyl-tRNA synthetase family.

It localises to the cytoplasm. The enzyme catalyses tRNA(Leu) + L-leucine + ATP = L-leucyl-tRNA(Leu) + AMP + diphosphate. This Lactococcus lactis subsp. lactis (strain IL1403) (Streptococcus lactis) protein is Leucine--tRNA ligase.